Reading from the N-terminus, the 580-residue chain is DNA mismatch repair protein MutL (580 aa).

Belongs to the DNA mismatch repair MutL/HexB family.

In terms of biological role, this protein is involved in the repair of mismatches in DNA. It is required for dam-dependent methyl-directed DNA mismatch repair. May act as a 'molecular matchmaker', a protein that promotes the formation of a stable complex between two or more DNA-binding proteins in an ATP-dependent manner without itself being part of a final effector complex. The sequence is that of DNA mismatch repair protein MutL from Chlamydia caviae (strain ATCC VR-813 / DSM 19441 / 03DC25 / GPIC) (Chlamydophila caviae).